The primary structure comprises 149 residues: Calmodulin (149 aa).

An N-acetylalanine modification is found at Ala-2. EF-hand domains lie at 8 to 43 (EQVSEYKEAFSLFDKDGDGQITTKELGTVMRSLGQN), 44 to 79 (PSESELQDMINEVDADNNGTIDFPEFLTMMARKMKD), 81 to 116 (DSEEEIREAFKVFDRDNNGFISAAELRHVMTSIGEK), and 117 to 149 (LTDDEVDEMIREADQDGDGRIDYNEFVQLMMQK). 19 residues coordinate Ca(2+): Asp-21, Asp-23, Asp-25, Gln-27, Glu-32, Asp-57, Asp-59, Asn-61, Thr-63, Glu-68, Asp-94, Asp-96, Asn-98, Glu-105, Asp-130, Asp-132, Asp-134, Arg-136, and Glu-141.

Belongs to the calmodulin family.

Calmodulin mediates the control of a large number of enzymes, ion channels and other proteins by Ca(2+). Among the enzymes to be stimulated by the calmodulin-Ca(2+) complex are a number of protein kinases and phosphatases. This Emericella nidulans (strain FGSC A4 / ATCC 38163 / CBS 112.46 / NRRL 194 / M139) (Aspergillus nidulans) protein is Calmodulin (camA).